The following is a 550-amino-acid chain: DNA mismatch repair protein MutL (550 aa).

It belongs to the DNA mismatch repair MutL/HexB family.

This protein is involved in the repair of mismatches in DNA. It is required for dam-dependent methyl-directed DNA mismatch repair. May act as a 'molecular matchmaker', a protein that promotes the formation of a stable complex between two or more DNA-binding proteins in an ATP-dependent manner without itself being part of a final effector complex. The sequence is that of DNA mismatch repair protein MutL from Microcystis aeruginosa (strain NIES-843 / IAM M-2473).